The chain runs to 357 residues: 3-isopropylmalate dehydrogenase (357 aa).

Residue 76–89 (GPKWDDLPSEKRPE) participates in NAD(+) binding. Arg96, Arg106, Arg135, and Asp224 together coordinate substrate. Mg(2+) contacts are provided by Asp224, Asp248, and Asp252. NAD(+) is bound at residue 282–294 (GSAPDIAGQDKAN).

It belongs to the isocitrate and isopropylmalate dehydrogenases family. LeuB type 1 subfamily. Homodimer. It depends on Mg(2+) as a cofactor. Requires Mn(2+) as cofactor.

The protein resides in the cytoplasm. The catalysed reaction is (2R,3S)-3-isopropylmalate + NAD(+) = 4-methyl-2-oxopentanoate + CO2 + NADH. It functions in the pathway amino-acid biosynthesis; L-leucine biosynthesis; L-leucine from 3-methyl-2-oxobutanoate: step 3/4. Its function is as follows. Catalyzes the oxidation of 3-carboxy-2-hydroxy-4-methylpentanoate (3-isopropylmalate) to 3-carboxy-4-methyl-2-oxopentanoate. The product decarboxylates to 4-methyl-2 oxopentanoate. This Nitratidesulfovibrio vulgaris (strain ATCC 29579 / DSM 644 / CCUG 34227 / NCIMB 8303 / VKM B-1760 / Hildenborough) (Desulfovibrio vulgaris) protein is 3-isopropylmalate dehydrogenase.